The primary structure comprises 153 residues: Regulator of sigma D (153 aa).

The protein belongs to the Rsd/AlgQ family. As to quaternary structure, interacts with RpoD.

The protein resides in the cytoplasm. Binds RpoD and negatively regulates RpoD-mediated transcription activation by preventing the interaction between the primary sigma factor RpoD with the catalytic core of the RNA polymerase and with promoter DNA. May be involved in replacement of the RNA polymerase sigma subunit from RpoD to RpoS during the transition from exponential growth to the stationary phase. The protein is Regulator of sigma D of Pectobacterium atrosepticum (strain SCRI 1043 / ATCC BAA-672) (Erwinia carotovora subsp. atroseptica).